We begin with the raw amino-acid sequence, 265 residues long: MSDLISALLLGILEGLTEFLPISSTGHLLIAEQWLGRRSDFFNIVIQAGAILAICLALRQRLWTLATGLGERDNRDYVLKVSVAFLVTAVVGLIVRKAGWQLPETLQPVAWALLIGGVWMLVAEHVAGKLPERDVVTWKVAIAVGLAQVVAGVFPGTSRSASTIFIAMLLGLSRRSAAADFVFMVGIPTMFAASGYALLEMYKEGGFGTEHWADVAVAFVAATITGFVVVKWLLSYIKKHRFTVFAVYRIVLGAALLLWLPAAAG.

7 helical membrane passes run 38–58 (RSDF…CLAL), 75–95 (RDYV…GLIV), 108–128 (PVAW…HVAG), 135–155 (VVTW…GVFP), 181–201 (FVFM…LLEM), 215–235 (VAVA…WLLS), and 244–264 (VFAV…PAAA).

Belongs to the UppP family.

The protein resides in the cell inner membrane. The enzyme catalyses di-trans,octa-cis-undecaprenyl diphosphate + H2O = di-trans,octa-cis-undecaprenyl phosphate + phosphate + H(+). Its function is as follows. Catalyzes the dephosphorylation of undecaprenyl diphosphate (UPP). Confers resistance to bacitracin. The sequence is that of Undecaprenyl-diphosphatase from Xanthomonas oryzae pv. oryzae (strain MAFF 311018).